Reading from the N-terminus, the 1388-residue chain is DNA-directed RNA polymerase subunit beta (1388 aa).

The protein belongs to the RNA polymerase beta chain family. As to quaternary structure, the RNAP catalytic core consists of 2 alpha, 1 beta, 1 beta' and 1 omega subunit. When a sigma factor is associated with the core the holoenzyme is formed, which can initiate transcription.

It catalyses the reaction RNA(n) + a ribonucleoside 5'-triphosphate = RNA(n+1) + diphosphate. Its function is as follows. DNA-dependent RNA polymerase catalyzes the transcription of DNA into RNA using the four ribonucleoside triphosphates as substrates. The polypeptide is DNA-directed RNA polymerase subunit beta (Stenotrophomonas maltophilia (strain K279a)).